The sequence spans 77 residues: Blood-induced peptide 1 (77 aa).

Residues 38–71 are a coiled coil; the sequence is EDFLHQENSELKKSLKNLEMENEKLKNILKTDYN.

Plays an important role in survival in host blood through increasing tolerance to stresses such as heat, salt, or cycloheximide, which is essential for virulence. The sequence is that of Blood-induced peptide 1 from Candida albicans (strain SC5314 / ATCC MYA-2876) (Yeast).